Here is a 577-residue protein sequence, read N- to C-terminus: Putative laccase-1 (577 aa).

The first 28 residues, 1-28 (MGTAKIPALLWFLLAGLVLALAVNPAHG), serve as a signal peptide directing secretion. Plastocyanin-like domains are found at residues 37 to 153 (FITE…PKRG) and 163 to 316 (KEIP…YTDS). N-linked (GlcNAc...) asparagine glycosylation is found at asparagine 42 and asparagine 83. Residues histidine 87 and histidine 89 each contribute to the Cu cation site. N-linked (GlcNAc...) asparagine glycosylation is present at asparagine 115. The Cu cation site is built by histidine 132 and histidine 134. N-linked (GlcNAc...) asparagine glycans are attached at residues asparagine 276, asparagine 304, asparagine 382, and asparagine 402. One can recognise a Plastocyanin-like 3 domain in the interval 442–561 (DINGGGPLLT…DTMFIVKDGK (120 aa)). Cu cation contacts are provided by histidine 478, histidine 481, histidine 483, histidine 540, cysteine 541, histidine 542, histidine 546, and methionine 551.

Belongs to the multicopper oxidase family. The cofactor is Cu cation.

The protein resides in the secreted. It is found in the extracellular space. Its subcellular location is the apoplast. It carries out the reaction 4 hydroquinone + O2 = 4 benzosemiquinone + 2 H2O. In terms of biological role, lignin degradation and detoxification of lignin-derived products. The sequence is that of Putative laccase-1 (LAC1) from Oryza sativa subsp. japonica (Rice).